The following is a 590-amino-acid chain: Myo-inositol transporter 3C (590 aa).

Residues methionine 1 to cysteine 63 lie on the Cytoplasmic side of the membrane. A helical transmembrane segment spans residues phenylalanine 64–alanine 86. The Extracellular segment spans residues leucine 87 to glutamate 105. The helical transmembrane segment at isoleucine 106–glycine 126 threads the bilayer. Topologically, residues aspartate 127 to lysine 132 are cytoplasmic. The helical transmembrane segment at valine 133–tyrosine 153 threads the bilayer. At serine 154 to arginine 162 the chain is on the extracellular side. The helical transmembrane segment at isoleucine 163 to threonine 183 threads the bilayer. Topologically, residues alanine 184 to cysteine 192 are cytoplasmic. Residues isoleucine 193–glycine 213 form a helical membrane-spanning segment. Topologically, residues valine 214–arginine 222 are extracellular. Residues leucine 223–proline 243 form a helical membrane-spanning segment. At glutamate 244–glutamine 325 the chain is on the cytoplasmic side. The chain crosses the membrane as a helical span at residues leucine 326 to threonine 346. Residues asparagine 347–alanine 349 lie on the Extracellular side of the membrane. The helical transmembrane segment at leucine 350–valine 370 threads the bilayer. The Cytoplasmic portion of the chain corresponds to aspartate 371–arginine 376. The chain crosses the membrane as a helical span at residues glycine 377–phenylalanine 397. At histidine 398–lysine 417 the chain is on the extracellular side. A helical transmembrane segment spans residues leucine 418–serine 438. Over histidine 439–serine 454 the chain is Cytoplasmic. The helical transmembrane segment at valine 455–tyrosine 475 threads the bilayer. Over leucine 476–serine 485 the chain is Extracellular. The chain crosses the membrane as a helical span at residues glycine 486–tyrosine 506. The Cytoplasmic portion of the chain corresponds to proline 507–arginine 590.

Belongs to the major facilitator superfamily. Sugar transporter (TC 2.A.1.1) family.

It is found in the cell membrane. The catalysed reaction is myo-inositol(out) + H(+)(out) = myo-inositol(in) + H(+)(in). Functionally, major transporter for myo-inositol. Plays a role in the traversal of the host blood-brain barrier. This chain is Myo-inositol transporter 3C, found in Cryptococcus neoformans var. grubii serotype A (strain H99 / ATCC 208821 / CBS 10515 / FGSC 9487) (Filobasidiella neoformans var. grubii).